The primary structure comprises 368 residues: MPINKYKAAVVTSEPVWENLEGGVVKTIEFINEAGKAGCKLIAFPEVWIPGYPYWMWKVNYLQSLPMLKAYRENSIAMDSSEMRRIRAAARDNQIYVSIGVSEIDHATLYLTQVLISPLGDVINHRRKIKPTHVEKLVYGDGSGDSFEPVTQTEIGRLGQLNCWENMNPFLKSLAVARGEQIHVAAWPVYPDLSKQVHPDPATNYADPASDLVTPAYAIETGTWVLAPFQRISVEGLKRHTPPGVEPETDATPYNGHARIFRPDGSLYAKPAVDFDGLMYVDIDLNESHLTKALADFAGHYMRPDLIRLLVDTRRKELVTEVGGGDNGGIQSYSTMARLGLDRPLEEEDYRQGTDAGETEKASSNGHA.

The 280-residue stretch at 6–285 (YKAAVVTSEP…DGLMYVDIDL (280 aa)) folds into the CN hydrolase domain. Glu46 functions as the Proton acceptor in the catalytic mechanism. Residue Lys128 is part of the active site. The active-site Nucleophile is Cys163. The segment at 341 to 368 (LDRPLEEEDYRQGTDAGETEKASSNGHA) is disordered.

This sequence belongs to the carbon-nitrogen hydrolase superfamily. Nitrilase family. Oligomer of dimers, forming left-handed helical fibers.

It carries out the reaction formamide = hydrogen cyanide + H2O. Catalyzes the hydration of cyanide to formamide. Degradation of cyanide may be important for plant pathogenic fungi in infection of cyanogenic plants. The sequence is that of Cyanide hydratase from Microdochium sorghi (Zonate leaf spot disease fungus).